A 339-amino-acid chain; its full sequence is Ketol-acid reductoisomerase (NADP(+)) (339 aa).

Residues 1–182 (MRVYYDRDAD…GGGRSGIIET (182 aa)) form the KARI N-terminal Rossmann domain. Residues 24–27 (YGSQ), lysine 48, serine 51, threonine 53, and 83–86 (DELQ) each bind NADP(+). The active site involves histidine 108. Residue glycine 134 coordinates NADP(+). Residues 183–328 (NFKEECETDL…AKLRGMMPWI (146 aa)) form the KARI C-terminal knotted domain. Residues aspartate 191, glutamate 195, glutamate 227, and glutamate 231 each contribute to the Mg(2+) site. Substrate is bound at residue serine 252.

This sequence belongs to the ketol-acid reductoisomerase family. Mg(2+) serves as cofactor.

It catalyses the reaction (2R)-2,3-dihydroxy-3-methylbutanoate + NADP(+) = (2S)-2-acetolactate + NADPH + H(+). It carries out the reaction (2R,3R)-2,3-dihydroxy-3-methylpentanoate + NADP(+) = (S)-2-ethyl-2-hydroxy-3-oxobutanoate + NADPH + H(+). It participates in amino-acid biosynthesis; L-isoleucine biosynthesis; L-isoleucine from 2-oxobutanoate: step 2/4. Its pathway is amino-acid biosynthesis; L-valine biosynthesis; L-valine from pyruvate: step 2/4. Its function is as follows. Involved in the biosynthesis of branched-chain amino acids (BCAA). Catalyzes an alkyl-migration followed by a ketol-acid reduction of (S)-2-acetolactate (S2AL) to yield (R)-2,3-dihydroxy-isovalerate. In the isomerase reaction, S2AL is rearranged via a Mg-dependent methyl migration to produce 3-hydroxy-3-methyl-2-ketobutyrate (HMKB). In the reductase reaction, this 2-ketoacid undergoes a metal-dependent reduction by NADPH to yield (R)-2,3-dihydroxy-isovalerate. This is Ketol-acid reductoisomerase (NADP(+)) from Sinorhizobium medicae (strain WSM419) (Ensifer medicae).